Consider the following 507-residue polypeptide: ATP synthase subunit alpha (507 aa).

G169–T176 contacts ATP.

Belongs to the ATPase alpha/beta chains family. F-type ATPases have 2 components, CF(1) - the catalytic core - and CF(0) - the membrane proton channel. CF(1) has five subunits: alpha(3), beta(3), gamma(1), delta(1), epsilon(1). CF(0) has three main subunits: a(1), b(2) and c(9-12). The alpha and beta chains form an alternating ring which encloses part of the gamma chain. CF(1) is attached to CF(0) by a central stalk formed by the gamma and epsilon chains, while a peripheral stalk is formed by the delta and b chains. In this bacterium the a and b subunits are transcribed but do not seem to be translated, thus the ATP synthase consists of the alpha, beta, gamma, delta, epsilon and c subunits.

It localises to the cell membrane. It catalyses the reaction ATP + H2O + 4 H(+)(in) = ADP + phosphate + 5 H(+)(out). Functionally, produces ATP from ADP in the presence of a proton gradient across the membrane. The alpha chain is a regulatory subunit. This Moorella thermoacetica (strain ATCC 39073 / JCM 9320) protein is ATP synthase subunit alpha.